The chain runs to 573 residues: 60 kDa heat shock protein, mitochondrial (573 aa).

The transit peptide at 1–26 (MLRLPTVFRQMRPVSRVLAPHLTRAY) directs the protein to the mitochondrion. Lys31 bears the N6-succinyllysine mark. Ser67 and Ser70 each carry phosphoserine. Lys75 lines the ATP pocket. An N6-acetyllysine modification is found at Lys75. Residue Lys82 is modified to N6-acetyllysine; alternate. N6-succinyllysine; alternate is present on Lys82. Lys87 bears the N6-acetyllysine mark. Residue Tyr90 is modified to Phosphotyrosine. An N6-acetyllysine modification is found at Lys91. 111–115 (DGTTT) contacts ATP. Lys125 carries the N6-acetyllysine; alternate modification. Lys125 bears the N6-succinyllysine; alternate mark. Lys130 bears the N6-acetyllysine mark. Position 133 is an N6-acetyllysine; alternate (Lys133). At Lys133 the chain carries N6-succinyllysine; alternate. An N6-malonyllysine; alternate modification is found at Lys133. Lys156 carries the N6-acetyllysine modification. An N6-acetyllysine; alternate mark is found at Lys191, Lys202, Lys205, Lys218, and Lys236. An N6-succinyllysine; alternate mark is found at Lys191, Lys202, Lys205, Lys218, and Lys236. N6-acetyllysine is present on Lys249. Residue Lys250 is modified to N6-acetyllysine; alternate. Lys250 is modified (N6-succinyllysine; alternate). N6-acetyllysine occurs at positions 269 and 292. Lys301 carries the N6-succinyllysine modification. N6-acetyllysine is present on Lys314. At Lys352 the chain carries N6-acetyllysine; alternate. Lys352 bears the N6-succinyllysine; alternate mark. The residue at position 389 (Lys389) is an N6-acetyllysine. N6-acetyllysine; alternate is present on Lys396. N6-succinyllysine; alternate is present on Lys396. Ser410 is subject to Phosphoserine. Position 440 (Gly440) interacts with ATP. Lys469 carries the N6-acetyllysine modification. At Lys481 the chain carries N6-acetyllysine; alternate. Lys481 bears the N6-succinyllysine; alternate mark. Position 488 is a phosphoserine (Ser488). Residue Asp520 participates in ATP binding. A Glycyl lysine isopeptide (Lys-Gly) (interchain with G-Cter in SUMO2) cross-link involves residue Lys551.

It belongs to the chaperonin (HSP60) family. In terms of assembly, homoheptamer arranged in a ring structure. The functional units of these chaperonins consist of heptameric rings of the large subunit Hsp60, which function as a back-to-back double ring. Interacts with 2 heptameric Hsp10 rings to form the symmetrical football complex. Interacts with HRAS. Interacts with ATAD3A. Interacts with ETFBKMT and EEF1AKMT3. Interacts with MFHAS1.

Its subcellular location is the mitochondrion matrix. It catalyses the reaction ATP + H2O + a folded polypeptide = ADP + phosphate + an unfolded polypeptide.. In terms of biological role, chaperonin implicated in mitochondrial protein import and macromolecular assembly. Together with Hsp10, facilitates the correct folding of imported proteins. May also prevent misfolding and promote the refolding and proper assembly of unfolded polypeptides generated under stress conditions in the mitochondrial matrix. The functional units of these chaperonins consist of heptameric rings of the large subunit Hsp60, which function as a back-to-back double ring. In a cyclic reaction, Hsp60 ring complexes bind one unfolded substrate protein per ring, followed by the binding of ATP and association with 2 heptameric rings of the co-chaperonin Hsp10. This leads to sequestration of the substrate protein in the inner cavity of Hsp60 where, for a certain period of time, it can fold undisturbed by other cell components. Synchronous hydrolysis of ATP in all Hsp60 subunits results in the dissociation of the chaperonin rings and the release of ADP and the folded substrate protein. This chain is 60 kDa heat shock protein, mitochondrial (HSPD1), found in Pongo abelii (Sumatran orangutan).